Reading from the N-terminus, the 298-residue chain is 1D-myo-inositol 2-acetamido-2-deoxy-alpha-D-glucopyranoside deacetylase (298 aa).

H14, D17, and H148 together coordinate Zn(2+). Residues 277 to 298 (RGPAGPDGREHDLFAGLDGPAT) form a disordered region.

This sequence belongs to the MshB deacetylase family. Zn(2+) serves as cofactor.

The enzyme catalyses 1D-myo-inositol 2-acetamido-2-deoxy-alpha-D-glucopyranoside + H2O = 1D-myo-inositol 2-amino-2-deoxy-alpha-D-glucopyranoside + acetate. Catalyzes the deacetylation of 1D-myo-inositol 2-acetamido-2-deoxy-alpha-D-glucopyranoside (GlcNAc-Ins) in the mycothiol biosynthesis pathway. The polypeptide is 1D-myo-inositol 2-acetamido-2-deoxy-alpha-D-glucopyranoside deacetylase (Nocardia farcinica (strain IFM 10152)).